Here is a 395-residue protein sequence, read N- to C-terminus: Phosphoribulokinase, chloroplastic (395 aa).

The transit peptide at 1–46 (MAVSTIYSTQALNSTHFLTSSSSSKQVFLYRRQPQTNRRFNTLITC) directs the protein to the chloroplast. The cysteines at positions 61 and 100 are disulfide-linked.

It belongs to the phosphoribulokinase family.

The protein resides in the plastid. The protein localises to the chloroplast. The catalysed reaction is D-ribulose 5-phosphate + ATP = D-ribulose 1,5-bisphosphate + ADP + H(+). Its pathway is carbohydrate biosynthesis; Calvin cycle. With respect to regulation, light regulated via thioredoxin by reversible oxidation/reduction of sulfhydryl/disulfide groups. The chain is Phosphoribulokinase, chloroplastic from Arabidopsis thaliana (Mouse-ear cress).